A 358-amino-acid polypeptide reads, in one-letter code: Alanine racemase (358 aa).

Catalysis depends on lysine 35, which acts as the Proton acceptor; specific for D-alanine. Lysine 35 bears the N6-(pyridoxal phosphate)lysine mark. Substrate is bound at residue arginine 130. Tyrosine 255 acts as the Proton acceptor; specific for L-alanine in catalysis. Methionine 303 is a binding site for substrate.

Belongs to the alanine racemase family. Pyridoxal 5'-phosphate serves as cofactor.

The enzyme catalyses L-alanine = D-alanine. The protein operates within amino-acid biosynthesis; D-alanine biosynthesis; D-alanine from L-alanine: step 1/1. In terms of biological role, catalyzes the interconversion of L-alanine and D-alanine. May also act on other amino acids. The protein is Alanine racemase (alr) of Shewanella sp. (strain MR-7).